Reading from the N-terminus, the 189-residue chain is Putative nucleotidase BC_3386 (189 aa).

Belongs to the 5'(3')-deoxyribonucleotidase family.

The protein is Putative nucleotidase BC_3386 of Bacillus cereus (strain ATCC 14579 / DSM 31 / CCUG 7414 / JCM 2152 / NBRC 15305 / NCIMB 9373 / NCTC 2599 / NRRL B-3711).